The chain runs to 147 residues: DNA polymerase III subunit chi (147 aa).

It belongs to the DNA polymerase III chi/HolC chain family. As to quaternary structure, the DNA polymerase III holoenzyme complex contains at least 10 different subunits organized into 3 functionally essential subassemblies: the Pol III core, the beta sliding clamp processivity factor and the clamp-loading complex. The Pol III core (subunits alpha, epsilon and theta) contains the polymerase and the 3'-5' exonuclease proofreading activities. The polymerase is tethered to the template via the dimeric beta sliding clamp processivity factor. The clamp-loading complex (also called gamma complex) assembles the beta sliding clamp onto the primed template and plays a central role in the organization and communication at the replication fork. The clamp-loading complex contains delta, delta', psi and chi, and 3 copies of either or both of two different DnaX proteins, gamma and tau. The DNA replisome complex has a single clamp loader (3 tau and 1 each of delta, delta', psi and chi subunits) which binds 3 Pol III cores (1 core on the leading strand and 2 on the lagging strand) each with a beta sliding clamp dimer. Additional proteins in the replisome are other copies of gamma, psi (holD) and chi (this protein), SSB, DNA helicase and RNA primase. The clamp loader hydrolyzes ATP to assemble the beta processivity factor onto the primed template and plays a central role in the organization and communication at the replication fork. The only subunit of the DNA polymerase III holoenzyme known to interact with single-stranded DNA binding protein (SSB). Interacts directly with the psi subunit (holD). Interacts directly with DNA helicase YoaA. It binds to HolD and YoaA, but not both simultaneously.

It catalyses the reaction DNA(n) + a 2'-deoxyribonucleoside 5'-triphosphate = DNA(n+1) + diphosphate. Part of the beta sliding clamp loading complex, which hydrolyzes ATP to load the beta clamp onto primed DNA to form the DNA replication pre-initiation complex. DNA polymerase III is a complex, multichain enzyme responsible for most of the replicative synthesis in bacteria. This DNA polymerase also exhibits 3' to 5' exonuclease activity. Genetically identified as involved in the repair of replication forks and tolerance of the chain-terminating nucleoside analog 3' AZT. This subunit may stabilize YoaA and/or stimulate the helicase activity of YoaA. The chain is DNA polymerase III subunit chi from Escherichia coli (strain K12).